We begin with the raw amino-acid sequence, 115 residues long: Con-Ins G1c (115 aa).

An N-terminal signal peptide occupies residues 1 to 24 (MTTSFYFLLMALGLLLYVCQSSFG). A propeptide spanning residues 25 to 29 (NQHTR) is cleaved from the precursor. Proline 34 is subject to 4-hydroxyproline; partial. Cystine bridges form between cysteine 38–cysteine 101, cysteine 50–cysteine 114, and cysteine 100–cysteine 105. Residue glutamate 41 is modified to 4-carboxyglutamate. Residues 53–94 (KRNDAGKKRGRASPLWQRRGSLSQLKARAKRNGAFHLPRDGR) constitute a propeptide, c peptide. Glutamate 98 carries the post-translational modification 4-carboxyglutamate. Proline 104 is subject to 4-hydroxyproline; partial. Glutamate 109 is modified (4-carboxyglutamate; partial).

Belongs to the insulin family. As to quaternary structure, heterodimer of A and B chains; disulfide-linked. Post-translationally, is different from Con-Ins G1a (AC A0A0B5AC95) due to absence of amidation at Cys-114. Expressed by the venom gland.

Its subcellular location is the secreted. Its function is as follows. This venom insulin, from a fish-hunting cone snail, facilitates prey capture by rapidly inducing hypoglycemic shock. It is one of the smallest known insulin found in nature and lacks the C-terminal segment of the B chain that, in human insulin, mediates engagement of the insulin receptor (INSR) and assembly of the hormone's hexameric storage form. Despite lacking this segment, it both binds and activates human insulin receptor (long isoform (HIR-B)) with only a 10-fold lower potency. In vivo, intraperitoneal injection of this peptide into zebrafish lowers blood glucose with the same potency than human insulin. In addition, when applied to water, this peptide reduces overall locomotor activity of zebrafish larvae, observed as a significant decrease in the percentage of time spent swimming and movement frequency. In Conus geographus (Geography cone), this protein is Con-Ins G1c.